A 65-amino-acid chain; its full sequence is Toxin CsEM1 (65 aa).

An LCN-type CS-alpha/beta domain is found at Lys1–Asn65. Intrachain disulfides connect Cys12–Cys64, Cys16–Cys40, Cys25–Cys45, and Cys29–Cys47.

The protein belongs to the long (4 C-C) scorpion toxin superfamily. Sodium channel inhibitor family. Beta subfamily. In terms of tissue distribution, expressed by the venom gland.

It localises to the secreted. Functionally, beta toxins bind voltage-independently at site-4 of sodium channels (Nav) and shift the voltage of activation toward more negative potentials thereby affecting sodium channel activation and promoting spontaneous and repetitive firing. Highly potent. This Centruroides sculpturatus (Arizona bark scorpion) protein is Toxin CsEM1.